Here is a 637-residue protein sequence, read N- to C-terminus: MGIEYSASSITVLEGLEAVRKRPGMYIGSTGPNGLHHLVYEVVDNCIDEAMAGYCDRITVVLEQGNVVRVEDNGRGIPVDVHPHEGVSALEVVLTKLHAGGKFDKKSYKVSGGLHGVGVSVVNALSLWVEVTVYRDGAEYYQKFNVGMPLAPVEKRGVSEKRGTIIRWQADPSIFKETVAYDFDVLLTRLRELAFLNSTVVIQLRDERLATAKQVEFAFEGGIRHFVSYLNRGKSVVPERPLYIEGSKSDVLVEVALQYHDGYTENVQSFVNDINTREGGTHLEGFKSALTRVANDFLKKSPKLAKKIEREEKLVGEDVRAGLTVVLSVKIPEPQFEGQTKTKLGNSEVRGIVDSLVGERLTLYFEQNPGVLTKILEKSIAEAQARLAARRAKEAARRKSGMDSFGLPGKLADCSLKDPAKCEVYIVEGDSAGGSAKKGRDSKTQAILPLWGKMLNVEKTRLDKVLHNEKLQPIIATLGTGVGKDFDLTRIRYHKVIIMADADVDGSHIRTLLLTFFFRYLPQIIEAGYVYLAMPPLYRIAWSKKELYVYSDTERDEALESIGKKSGVAVQRYKGLGEMDGTQLWETTMNPVRRKMMQVVLSDAVEADRVFSTLMGEDVEPRRKFIEENAIYARLDV.

Residues 422 to 536 (CEVYIVEGDS…AGYVYLAMPP (115 aa)) form the Toprim domain. Residues E428, D501, and D503 each contribute to the Mg(2+) site.

It belongs to the type II topoisomerase GyrB family. As to quaternary structure, heterotetramer, composed of two GyrA and two GyrB chains. In the heterotetramer, GyrA contains the active site tyrosine that forms a transient covalent intermediate with DNA, while GyrB binds cofactors and catalyzes ATP hydrolysis. The cofactor is Mg(2+). Mn(2+) serves as cofactor. Ca(2+) is required as a cofactor.

It localises to the cytoplasm. It catalyses the reaction ATP-dependent breakage, passage and rejoining of double-stranded DNA.. Its function is as follows. A type II topoisomerase that negatively supercoils closed circular double-stranded (ds) DNA in an ATP-dependent manner to modulate DNA topology and maintain chromosomes in an underwound state. Negative supercoiling favors strand separation, and DNA replication, transcription, recombination and repair, all of which involve strand separation. Also able to catalyze the interconversion of other topological isomers of dsDNA rings, including catenanes and knotted rings. Type II topoisomerases break and join 2 DNA strands simultaneously in an ATP-dependent manner. The chain is DNA gyrase subunit B from Treponema pallidum (strain Nichols).